Reading from the N-terminus, the 470-residue chain is Sulfate adenylyltransferase subunit 1 (470 aa).

A tr-type G domain is found at 22–236 (KELLRFITCG…YLETIKIDYA (215 aa)). Residues 31–38 (GSVDDGKS) are G1. 31–38 (GSVDDGKS) provides a ligand contact to GTP. The interval 89 to 93 (GITID) is G2. The tract at residues 110–113 (DTPG) is G3. GTP is bound by residues 110 to 114 (DTPGH) and 165 to 168 (NKMD). Positions 165 to 168 (NKMD) are G4. A G5 region spans residues 202–204 (SAL).

Belongs to the TRAFAC class translation factor GTPase superfamily. Classic translation factor GTPase family. CysN/NodQ subfamily. As to quaternary structure, heterodimer composed of CysD, the smaller subunit, and CysN.

The enzyme catalyses sulfate + ATP + H(+) = adenosine 5'-phosphosulfate + diphosphate. The protein operates within sulfur metabolism; hydrogen sulfide biosynthesis; sulfite from sulfate: step 1/3. Functionally, with CysD forms the ATP sulfurylase (ATPS) that catalyzes the adenylation of sulfate producing adenosine 5'-phosphosulfate (APS) and diphosphate, the first enzymatic step in sulfur assimilation pathway. APS synthesis involves the formation of a high-energy phosphoric-sulfuric acid anhydride bond driven by GTP hydrolysis by CysN coupled to ATP hydrolysis by CysD. The sequence is that of Sulfate adenylyltransferase subunit 1 from Francisella tularensis subsp. novicida (strain U112).